A 912-amino-acid polypeptide reads, in one-letter code: Protein translocase subunit SecA (912 aa).

Residues Gln-87, 105–109 (GEGKT), and Asp-510 each bind ATP. The interval 854-912 (KLRHEQASAAQAEGEGDDGQQGQQATPETFVRQERKVGRNEPCPCGSGKKYKQCCGKVS) is disordered. Positions 896, 898, 907, and 908 each coordinate Zn(2+).

It belongs to the SecA family. In terms of assembly, monomer and homodimer. Part of the essential Sec protein translocation apparatus which comprises SecA, SecYEG and auxiliary proteins SecDF-YajC and YidC. Requires Zn(2+) as cofactor.

Its subcellular location is the cell inner membrane. It is found in the cytoplasm. It carries out the reaction ATP + H2O + cellular proteinSide 1 = ADP + phosphate + cellular proteinSide 2.. Its function is as follows. Part of the Sec protein translocase complex. Interacts with the SecYEG preprotein conducting channel. Has a central role in coupling the hydrolysis of ATP to the transfer of proteins into and across the cell membrane, serving both as a receptor for the preprotein-SecB complex and as an ATP-driven molecular motor driving the stepwise translocation of polypeptide chains across the membrane. The chain is Protein translocase subunit SecA from Marinobacter nauticus (strain ATCC 700491 / DSM 11845 / VT8) (Marinobacter aquaeolei).